We begin with the raw amino-acid sequence, 398 residues long: Succinate--CoA ligase [ADP-forming] subunit beta (398 aa).

Residues 9-254 (KAVLREFGVP…ESEEDAKEIE (246 aa)) enclose the ATP-grasp domain. ATP contacts are provided by residues lysine 46, 53–55 (GRG), glutamate 109, serine 112, and glutamate 117. Residues asparagine 209 and aspartate 223 each contribute to the Mg(2+) site. Substrate-binding positions include asparagine 274 and 331–333 (GIM).

Belongs to the succinate/malate CoA ligase beta subunit family. As to quaternary structure, heterotetramer of two alpha and two beta subunits. Mg(2+) is required as a cofactor.

It carries out the reaction succinate + ATP + CoA = succinyl-CoA + ADP + phosphate. It catalyses the reaction GTP + succinate + CoA = succinyl-CoA + GDP + phosphate. It participates in carbohydrate metabolism; tricarboxylic acid cycle; succinate from succinyl-CoA (ligase route): step 1/1. In terms of biological role, succinyl-CoA synthetase functions in the citric acid cycle (TCA), coupling the hydrolysis of succinyl-CoA to the synthesis of either ATP or GTP and thus represents the only step of substrate-level phosphorylation in the TCA. The beta subunit provides nucleotide specificity of the enzyme and binds the substrate succinate, while the binding sites for coenzyme A and phosphate are found in the alpha subunit. In Rhodopseudomonas palustris (strain HaA2), this protein is Succinate--CoA ligase [ADP-forming] subunit beta.